The following is a 159-amino-acid chain: Keratin-associated protein 11-1 (159 aa).

A run of 4 repeats spans residues 107–116 (CQPLSGVSTV), 117–126 (CKPVRSISTV), 127–136 (CQPVGGVSTI), and 137–146 (CQPTCGVSRT). The tract at residues 107–146 (CQPLSGVSTVCKPVRSISTVCQPVGGVSTICQPTCGVSRT) is 4 X 10 AA approximate repeats.

It belongs to the PMG family. Wool.

Its function is as follows. In the wool cortex, wool keratin intermediate filaments are embedded in an interfilamentous matrix, consisting of wool keratin-associated proteins (KRTAP), which are essential for the formation of a rigid and resistant wool shaft through their extensive disulfide bond cross-linking with abundant cysteine residues of wool keratins. The matrix proteins include the high-sulfur and high-glycine-tyrosine keratins. This Capra hircus (Goat) protein is Keratin-associated protein 11-1 (KRTAP11-1).